The chain runs to 337 residues: 1-aminocyclopropane-1-carboxylate deaminase (337 aa).

K50 is modified (N6-(pyridoxal phosphate)lysine). The active-site Nucleophile is S77.

This sequence belongs to the ACC deaminase/D-cysteine desulfhydrase family. As to quaternary structure, homotrimer. It depends on pyridoxal 5'-phosphate as a cofactor.

It catalyses the reaction 1-aminocyclopropane-1-carboxylate + H2O = 2-oxobutanoate + NH4(+). Functionally, catalyzes a cyclopropane ring-opening reaction, the irreversible conversion of 1-aminocyclopropane-1-carboxylate (ACC) to ammonia and alpha-ketobutyrate. Allows growth on ACC as a nitrogen source. The protein is 1-aminocyclopropane-1-carboxylate deaminase of Rhizobium radiobacter (Agrobacterium tumefaciens).